Reading from the N-terminus, the 227-residue chain is Eukaryotic translation initiation factor NCBP (227 aa).

Over residues 1-22 the composition is skewed to basic and acidic residues; sequence MEPAAEKREAEQEELQQQHDEP. A disordered region spans residues 1 to 43; sequence MEPAAEKREAEQEELQQQHDEPAVPSADDDEAEAEENERRNRE. The segment covering 27–36 has biased composition (acidic residues); that stretch reads ADDDEAEAEE.

This sequence belongs to the eukaryotic initiation factor 4E family. EIF4F is a multi-subunit complex, the composition of which varies with external and internal environmental conditions. It is composed of at least EIF4A, EIF4E and EIF4G. EIF4E is also known to interact with other partners. In higher plants two isoforms of EIF4F have been identified, named isoform EIF4F and isoform EIF(iso)4F. Isoform EIF4F has subunits p220 and p26, whereas isoform EIF(iso)4F has subunits p82 and p28.

Functionally, recognizes and binds the 7-methylguanosine-containing mRNA cap during an early step in the initiation of protein synthesis and facilitates ribosome binding by inducing the unwinding of the mRNAs secondary structures. This chain is Eukaryotic translation initiation factor NCBP (NCBP), found in Oryza sativa subsp. japonica (Rice).